The sequence spans 265 residues: Transcription factor Spi-B-like (265 aa).

Residues 1 to 31 form a TAD1 (Acidic) region; sequence MLTLEASQLDGPHPSYMFSDSSFYDLDSCKP. Positions 42 to 63 are TAD2; that stretch reads AEPPTDPCAGWLELAEPGYEPF. Residues 127-160 are disordered; it reads TPLSEDDDFPTDAPALEVSDSDSDENLSPGGSLD. Positions 169 to 252 form a DNA-binding region, ETS; it reads LRLYQFLLGL…VKKKLTYQFG (84 aa).

The protein belongs to the ETS family.

It is found in the nucleus. Functionally, may act as a sequence specific transcriptional activator. This Paleosuchus palpebrosus (Cuvier's smooth-fronted caiman) protein is Transcription factor Spi-B-like.